We begin with the raw amino-acid sequence, 345 residues long: NADH-quinone oxidoreductase subunit H (345 aa).

8 helical membrane-spanning segments follow: residues 13–33 (VLILAQVLAVIGFVMVSLLFL), 84–104 (FMLAPMTSFVLALLAWAVIPF), 115–135 (VAILFVFAISSLEVYGVIMGG), 161–181 (LGLIIIGVIISTGSMNFGGIV), 190–210 (FFSWYWLPHFPMVFLFFISCL), 248–268 (YIAIFLMCALTSLLFFGGWLS), 277–297 (VFWMIAKMAFFFFLFAMVKAI), and 309–329 (LGWKVFLPFSLVWVVFVAFAA).

The protein belongs to the complex I subunit 1 family. As to quaternary structure, NDH-1 is composed of 14 different subunits. Subunits NuoA, H, J, K, L, M, N constitute the membrane sector of the complex.

It localises to the cell inner membrane. The catalysed reaction is a quinone + NADH + 5 H(+)(in) = a quinol + NAD(+) + 4 H(+)(out). In terms of biological role, NDH-1 shuttles electrons from NADH, via FMN and iron-sulfur (Fe-S) centers, to quinones in the respiratory chain. The immediate electron acceptor for the enzyme in this species is believed to be ubiquinone. Couples the redox reaction to proton translocation (for every two electrons transferred, four hydrogen ions are translocated across the cytoplasmic membrane), and thus conserves the redox energy in a proton gradient. This subunit may bind ubiquinone. The sequence is that of NADH-quinone oxidoreductase subunit H from Roseobacter denitrificans (strain ATCC 33942 / OCh 114) (Erythrobacter sp. (strain OCh 114)).